A 730-amino-acid chain; its full sequence is Guanyl-specific ribonuclease pgl-1 (730 aa).

Positions 205–447 (KQLMLDGPKS…VTRIVESLEK (243 aa)) are involved in dimerization. His437 functions as the Proton acceptor in the catalytic mechanism. Polar residues-rich tracts occupy residues 452 to 472 (DTPSGRKSNVQPSTSQQQDSA) and 568 to 595 (DANQDTSSSASPEVAPSFSTDGWDSPTK). Disordered stretches follow at residues 452-475 (DTPSGRKSNVQPSTSQQQDSAYTK), 567-639 (SDAN…TPMP), and 686-730 (GGRG…RGGF). The interval 674-730 (GGGRGGYGGGDRGGRGGYGGDRGGRGGYGGGDRGGRGGYGGDRGRGGYGGRGGRGGF) is RNA-binding RGG-box.

In terms of assembly, homodimer. Interacts with pgl-2 and pgl-3; this association is not required for P-granule localization of either pgl-2 or pgl-3. Interacts with ife-1. Interacts with prmt-1; the interaction is direct. Interacts with nmad-1. Interacts with P granule components meg-1, meg-3 and meg-4. Does not require metal ions for catalytic activity. is required as a cofactor. Post-translationally, methylated at arginine residues in the RNA-binding RGG-box by prmt-1. Methylation promotes P-granule degradation by autophagy. In terms of tissue distribution, expressed in the germline. Expressed in most somatic cells.

Its subcellular location is the cytoplasmic granule. It carries out the reaction [RNA] containing guanosine + H2O = an [RNA fragment]-3'-guanosine-3'-phosphate + a 5'-hydroxy-ribonucleotide-3'-[RNA fragment].. With respect to regulation, not inhibited by RNase inhibitor RNasin. Its function is as follows. Guanyl-specific endoribonuclease which cleaves the phosphodiester bond in single-stranded RNA between the 3'-guanylic residue and the 5'-OH residue of adjacent nucleotide, resulting in the formation of a corresponding 2',3'-cyclic phosphate intermediate. Together with the P-granule component pgl-3, is involved in the formation of P-granules. Together with pgl-3, probably recruits other granule components such as pos-1, mex-3 and glh-1 to P-granules. In addition, may act redundantly with pgl-3 to protect germ cells from excessive germline apoptosis during normal oogenesis and development of the two gonadal arms. This may in part be through regulating the localization of sir-2.1 which is involved in germ cell apoptosis. May protect somatic cells from excessive apoptosis during normal development. Essential role in male and female postembryonic germline development; maternally provided protein maintains a population of proliferating germ cells and zygotic expression is required for correct oogenesis. This chain is Guanyl-specific ribonuclease pgl-1, found in Caenorhabditis elegans.